The sequence spans 359 residues: 3-dehydroquinate synthase (359 aa).

Residues 72–77 (DGEQYK), 106–110 (GVIGD), 130–131 (TT), K143, K152, and 170–173 (CLKT) contribute to the NAD(+) site. Residues E185, H248, and H265 each contribute to the Zn(2+) site.

It belongs to the sugar phosphate cyclases superfamily. Dehydroquinate synthase family. Requires Co(2+) as cofactor. It depends on Zn(2+) as a cofactor. NAD(+) is required as a cofactor.

The protein resides in the cytoplasm. The enzyme catalyses 7-phospho-2-dehydro-3-deoxy-D-arabino-heptonate = 3-dehydroquinate + phosphate. The protein operates within metabolic intermediate biosynthesis; chorismate biosynthesis; chorismate from D-erythrose 4-phosphate and phosphoenolpyruvate: step 2/7. Functionally, catalyzes the conversion of 3-deoxy-D-arabino-heptulosonate 7-phosphate (DAHP) to dehydroquinate (DHQ). This Photobacterium profundum (strain SS9) protein is 3-dehydroquinate synthase.